The sequence spans 79 residues: Large ribosomal subunit protein uL29 (79 aa).

The protein belongs to the universal ribosomal protein uL29 family.

The protein is Large ribosomal subunit protein uL29 of Gluconacetobacter diazotrophicus (strain ATCC 49037 / DSM 5601 / CCUG 37298 / CIP 103539 / LMG 7603 / PAl5).